We begin with the raw amino-acid sequence, 328 residues long: 6-phosphogluconolactonase (328 aa).

It belongs to the cycloisomerase 2 family.

It carries out the reaction 6-phospho-D-glucono-1,5-lactone + H2O = 6-phospho-D-gluconate + H(+). The protein operates within carbohydrate degradation; pentose phosphate pathway; D-ribulose 5-phosphate from D-glucose 6-phosphate (oxidative stage): step 2/3. Catalyzes the hydrolysis of 6-phosphogluconolactone to 6-phosphogluconate. The chain is 6-phosphogluconolactonase from Xenorhabdus nematophila (strain ATCC 19061 / DSM 3370 / CCUG 14189 / LMG 1036 / NCIMB 9965 / AN6).